A 337-amino-acid polypeptide reads, in one-letter code: D-alanine--D-alanine ligase (337 aa).

In terms of domain architecture, ATP-grasp spans 124 to 330; sequence KMWFSALGIP…FTEYLSLVIN (207 aa). An ATP-binding site is contributed by 154-209; the sequence is ALANWGSIFIKAASQGSSVGCYKVDDSSKVAQVLKDAFGYAPYVVVEKTIKARELE. Positions 284, 297, and 299 each coordinate Mg(2+).

Belongs to the D-alanine--D-alanine ligase family. Mg(2+) is required as a cofactor. It depends on Mn(2+) as a cofactor.

It localises to the cytoplasm. The enzyme catalyses 2 D-alanine + ATP = D-alanyl-D-alanine + ADP + phosphate + H(+). The protein operates within cell wall biogenesis; peptidoglycan biosynthesis. In terms of biological role, cell wall formation. This chain is D-alanine--D-alanine ligase, found in Shewanella putrefaciens (strain CN-32 / ATCC BAA-453).